The primary structure comprises 172 residues: Adenine phosphoribosyltransferase (172 aa).

The protein belongs to the purine/pyrimidine phosphoribosyltransferase family. In terms of assembly, homodimer.

It is found in the cytoplasm. The enzyme catalyses AMP + diphosphate = 5-phospho-alpha-D-ribose 1-diphosphate + adenine. It functions in the pathway purine metabolism; AMP biosynthesis via salvage pathway; AMP from adenine: step 1/1. In terms of biological role, catalyzes a salvage reaction resulting in the formation of AMP, that is energically less costly than de novo synthesis. This chain is Adenine phosphoribosyltransferase, found in Picosynechococcus sp. (strain ATCC 27264 / PCC 7002 / PR-6) (Agmenellum quadruplicatum).